A 497-amino-acid polypeptide reads, in one-letter code: Solute carrier family 2, facilitated glucose transporter member 6 (497 aa).

Topologically, residues 1 to 36 (MQEPLLRTEGLDYDTFPEVPATPGERERAGALKNRR) are cytoplasmic. Positions 5–6 (LL) match the Dileucine internalization motif motif. A helical membrane pass occupies residues 37–57 (VFLATFAAVLGNFSFGYALVY). The Extracellular portion of the chain corresponds to 58–80 (TSPVIPELKLSSDPALHLDKIQA). Residues 81–101 (SWFGSVFTLGAAAGGLSAMLL) traverse the membrane as a helical segment. The Cytoplasmic portion of the chain corresponds to 102 to 115 (NDLLGRKLSIMFSA). Residues 116–136 (VPSAIGYAIMAGARGLWMLLL) form a helical membrane-spanning segment. Over 137–138 (GR) the chain is Extracellular. A helical transmembrane segment spans residues 139 to 159 (MLTGFAGGLTAACIPVYVSEI). Over 160 to 171 (APPDVRGALGAT) the chain is Cytoplasmic. The helical transmembrane segment at 172 to 192 (PQLMAVFGSLSLYALGLLLPW) threads the bilayer. Q173 is a binding site for a D-hexose. Residue R193 is a topological domain, extracellular. The chain crosses the membrane as a helical span at residues 194–214 (WLAVAGEGPVLIMILLLSFMP). The Cytoplasmic portion of the chain corresponds to 215-273 (NSPRFLLSKSRDEEALQALTWLRADSEVHWEFEQIQDNVRRQSSRVSWAEAREPRVYRP). The chain crosses the membrane as a helical span at residues 274–294 (VLIAVLMRFLQQLTGITPILV). A D-hexose is bound at residue 284–285 (QQ). Residues 295-312 (YLQTIFDNTSVVLPSQQD) lie on the Extracellular side of the membrane. N302 carries N-linked (GlcNAc...) asparagine glycosylation. The helical transmembrane segment at 313–333 (AAIVGAVRLLSVLIAAVTMDL) threads the bilayer. Residues 334–337 (AGRK) lie on the Cytoplasmic side of the membrane. A helical transmembrane segment spans residues 338–358 (VLLYVSASVMFAANLTLGLYV). Topologically, residues 359-385 (QFVPRPLTPNSTVEIVTLGDTAFNYLT) are extracellular. N368 carries an N-linked (GlcNAc...) asparagine glycan. The chain crosses the membrane as a helical span at residues 386–406 (LIPLLATMLFIMGYAMGWGPI). At 407-425 (TWLLMSEVLPLRARGVASG) the chain is on the cytoplasmic side. A D-hexose is bound at residue W408. Residues 426–446 (LCVLVSWLTAFVLTNYFLLAV) traverse the membrane as a helical segment. N447 is a topological domain (extracellular). The chain crosses the membrane as a helical span at residues 448 to 468 (AFGLQVPFFFFSAICLLSLLF). The Cytoplasmic segment spans residues 469–497 (TGCCVPETRGRSLEQIEAFFHTRRMSFRP).

Belongs to the major facilitator superfamily. Sugar transporter (TC 2.A.1.1) family. As to expression, mainly expressed in brain and spleen. Also expressed in lung, heart, muscle, liver, kidney, fat, whole blood, testes, ovaries and uterus.

It localises to the lysosome membrane. Functionally, probable sugar transporter that acts as a regulator of glycolysis in macrophages. Does not transport glucose. The chain is Solute carrier family 2, facilitated glucose transporter member 6 from Mus musculus (Mouse).